Here is a 445-residue protein sequence, read N- to C-terminus: Phosphoglucosamine mutase (445 aa).

S102 functions as the Phosphoserine intermediate in the catalytic mechanism. Mg(2+)-binding residues include S102, D241, D243, and D245. Position 102 is a phosphoserine (S102).

The protein belongs to the phosphohexose mutase family. It depends on Mg(2+) as a cofactor. Post-translationally, activated by phosphorylation.

The enzyme catalyses alpha-D-glucosamine 1-phosphate = D-glucosamine 6-phosphate. Functionally, catalyzes the conversion of glucosamine-6-phosphate to glucosamine-1-phosphate. In Sodalis glossinidius (strain morsitans), this protein is Phosphoglucosamine mutase.